A 222-amino-acid polypeptide reads, in one-letter code: MDIERVNENTLKLFITYNDIEDRGYSREEIWYNRAKGEQLFWDMIDEVNTEDYFDVEGPIWIHINASEVGLEIIVTRAHILKDGETLDGHSNFDEHKEMFAPFDEVGDDLLSQLTQFGDMDESELFMDTDIYVYKFKDIDELIPVAKRMTDELVDSSLFKYENWYYLVVDFGNADEELNRHDRNAVIKEFLTPSNFTIHRLEEYGEKIMEFNCFETVRKYFA.

This sequence belongs to the MecA family. Homodimer.

Enables the recognition and targeting of unfolded and aggregated proteins to the ClpC protease or to other proteins involved in proteolysis. This chain is Adapter protein MecA, found in Lysinibacillus sphaericus (strain C3-41).